Here is a 245-residue protein sequence, read N- to C-terminus: Eukaryotic translation initiation factor 4E type 2 (245 aa).

The segment covering Met1 to Asn38 has biased composition (basic and acidic residues). A disordered region spans residues Met1 to Ala52. Ser13 carries the post-translational modification Phosphoserine. The EIF4EBP1/2/3 binding stretch occupies residues His54–Gln57. An mRNA-binding site is contributed by Tyr78–Glu79. Residues Trp95 to Ser99 are EIF4EBP1/2/3 binding. MRNA is bound by residues His110 and Trp124–Glu125. The residue at position 134 (Lys134) is an N6-acetyllysine; alternate. A Glycyl lysine isopeptide (Lys-Gly) (interchain with G-Cter in ISG15); alternate cross-link involves residue Lys134. The tract at residues Asn150–Gly157 is EIF4EBP1/2/3 binding. Residues Arg174 to Ile179 and Lys222 to Pro224 contribute to the mRNA site. Lys222 is covalently cross-linked (Glycyl lysine isopeptide (Lys-Gly) (interchain with G-Cter in ISG15)).

This sequence belongs to the eukaryotic initiation factor 4E family. Interacts with EIF4EBP1, EIF4EBP2 and EIF4EBP3. Does not interact with eIF4G (EIF4G1, EIF4G2 or EIF4G3). Component of the 4EHP-GYF2 complex, at least composed of EIF4E2, GIGYF2 and ZNF598. Interacts with GIGYF2 (via the 4EHP-binding motif); the interaction is direct. Interacts with EIF4ENIF1/4E-T (via YXXXXLphi motif); increasing affinity for the 7-methylguanosine-containing mRNA cap. Post-translationally, ubiquitinated by ARIH1. The consequences of ubiquitination are however unclear: according to a report, EIF4E2 ubiquitination leads to promote EIF4E2 cap-binding and protein translation arrest. According to another report ubiquitination leads to its subsequent degradation. In terms of processing, ISGylation enhances its cap structure-binding activity and translation-inhibition activity.

It localises to the cytoplasm. The protein resides in the P-body. Functionally, recognizes and binds the 7-methylguanosine-containing mRNA cap during an early step in the initiation. Acts as a repressor of translation initiation. In contrast to EIF4E, it is unable to bind eIF4G (EIF4G1, EIF4G2 or EIF4G3), suggesting that it acts by competing with EIF4E and block assembly of eIF4F at the cap. In P-bodies, component of a complex that promotes miRNA-mediated translational repression. Involved in virus-induced host response by mediating miRNA MIR34A-induced translational silencing which controls IFNB1 production by a negative feedback mechanism. Its function is as follows. Component of the 4EHP-GYF2 complex, a multiprotein complex that acts as a repressor of translation initiation. In association with GIGYF2, assists ribosome-associated quality control (RQC) by sequestering the mRNA cap, blocking ribosome initiation and decreasing the translational load on problematic messages. Part of a pathway that works in parallel to RQC-mediated degradation of the stalled nascent polypeptide. GIGYF2 and EIF4E2 work downstream and independently of ZNF598, which seems to work as a scaffold that can recruit them to faulty mRNA even if alternative recruitment mechanisms may exist. In terms of biological role, (Microbial infection) Upon SARS coronavirus-2/SARS-CoV-2 infection, the interaction with non-structural protein 2 (nsp2) with GIGYF2 enhances GIGYF2 binding to EIF4E2 and increases repression of translation initiation of genes involved in antiviral innate immune response such as IFNB1. This chain is Eukaryotic translation initiation factor 4E type 2, found in Homo sapiens (Human).